Here is a 138-residue protein sequence, read N- to C-terminus: uncharacterized protein (138 aa).

The helical transmembrane segment at 11–33 (ILLGLTLSLTFLYPLIITLIILY) threads the bilayer.

Its subcellular location is the membrane. This is an uncharacterized protein from Aquifex aeolicus (strain VF5).